A 750-amino-acid polypeptide reads, in one-letter code: Polyribonucleotide nucleotidyltransferase (750 aa).

The Mg(2+) site is built by aspartate 489 and aspartate 495. Residues 556-620 (PKMITRRIPN…EGIDKVIAKI (65 aa)) form the KH domain. Positions 630-701 (GSVYEVKVIK…KTRKDKVSRK (72 aa)) constitute an S1 motif domain. Residues 697–750 (KVSRKALMEKPEGYKERAPRDRDDKRGSRDNNRGRDNRGRDNRRDDRKPRENKD) form a disordered region. The span at 702–750 (ALMEKPEGYKERAPRDRDDKRGSRDNNRGRDNRGRDNRRDDRKPRENKD) shows a compositional bias: basic and acidic residues.

The protein belongs to the polyribonucleotide nucleotidyltransferase family. Mg(2+) is required as a cofactor.

The protein resides in the cytoplasm. The catalysed reaction is RNA(n+1) + phosphate = RNA(n) + a ribonucleoside 5'-diphosphate. Its function is as follows. Involved in mRNA degradation. Catalyzes the phosphorolysis of single-stranded polyribonucleotides processively in the 3'- to 5'-direction. The protein is Polyribonucleotide nucleotidyltransferase of Christiangramia forsetii (strain DSM 17595 / CGMCC 1.15422 / KT0803) (Gramella forsetii).